The sequence spans 249 residues: Large ribosomal subunit protein uL10m (249 aa).

The transit peptide at 1–31 (MLQLRFMPGWVPRNGFFGLKETIGTVHKRFY) directs the protein to the mitochondrion. Residues 226-249 (SHNDNQKPKEDVESTTDAESKGSK) form a disordered region.

It belongs to the universal ribosomal protein uL10 family. As to quaternary structure, component of the mitochondrial large ribosomal subunit (mt-LSU). Mature yeast 74S mitochondrial ribosomes consist of a small (37S) and a large (54S) subunit. The 37S small subunit contains a 15S ribosomal RNA (15S mt-rRNA) and 34 different proteins. The 54S large subunit contains a 21S rRNA (21S mt-rRNA) and 46 different proteins.

Its subcellular location is the mitochondrion. Component of the mitochondrial ribosome (mitoribosome), a dedicated translation machinery responsible for the synthesis of mitochondrial genome-encoded proteins, including at least some of the essential transmembrane subunits of the mitochondrial respiratory chain. The mitoribosomes are attached to the mitochondrial inner membrane and translation products are cotranslationally integrated into the membrane. In Saccharomyces cerevisiae (strain ATCC 204508 / S288c) (Baker's yeast), this protein is Large ribosomal subunit protein uL10m (MRPL11).